The chain runs to 249 residues: 3-deoxy-manno-octulosonate cytidylyltransferase (249 aa).

The protein belongs to the KdsB family.

The protein resides in the cytoplasm. It catalyses the reaction 3-deoxy-alpha-D-manno-oct-2-ulosonate + CTP = CMP-3-deoxy-beta-D-manno-octulosonate + diphosphate. It participates in nucleotide-sugar biosynthesis; CMP-3-deoxy-D-manno-octulosonate biosynthesis; CMP-3-deoxy-D-manno-octulosonate from 3-deoxy-D-manno-octulosonate and CTP: step 1/1. Its pathway is bacterial outer membrane biogenesis; lipopolysaccharide biosynthesis. In terms of biological role, activates KDO (a required 8-carbon sugar) for incorporation into bacterial lipopolysaccharide in Gram-negative bacteria. The sequence is that of 3-deoxy-manno-octulosonate cytidylyltransferase from Oleidesulfovibrio alaskensis (strain ATCC BAA-1058 / DSM 17464 / G20) (Desulfovibrio alaskensis).